Here is a 319-residue protein sequence, read N- to C-terminus: Transaldolase (319 aa).

Catalysis depends on K126, which acts as the Schiff-base intermediate with substrate.

The protein belongs to the transaldolase family. Type 1 subfamily. Homodimer.

Its subcellular location is the cytoplasm. It catalyses the reaction D-sedoheptulose 7-phosphate + D-glyceraldehyde 3-phosphate = D-erythrose 4-phosphate + beta-D-fructose 6-phosphate. Its pathway is carbohydrate degradation; pentose phosphate pathway; D-glyceraldehyde 3-phosphate and beta-D-fructose 6-phosphate from D-ribose 5-phosphate and D-xylulose 5-phosphate (non-oxidative stage): step 2/3. Its function is as follows. Transaldolase is important for the balance of metabolites in the pentose-phosphate pathway. The sequence is that of Transaldolase from Bordetella petrii (strain ATCC BAA-461 / DSM 12804 / CCUG 43448).